The sequence spans 447 residues: C4-dicarboxylate transport protein 3 (447 aa).

8 helical membrane-spanning segments follow: residues 5–27 (TLGK…GVAA), 42–64 (IKLI…IARM), 77–99 (ALVY…VNLV), 146–165 (LARN…GIAL), 186–208 (VFSI…MAFT), 223–245 (LMAT…VARL), 315–337 (IFVA…LGVL), and 352–374 (FITL…VLLL).

It belongs to the dicarboxylate/amino acid:cation symporter (DAACS) (TC 2.A.23) family.

The protein resides in the cell inner membrane. Responsible for the transport of dicarboxylates such as succinate, fumarate, and malate from the periplasm across the membrane. The protein is C4-dicarboxylate transport protein 3 (dctA3) of Ralstonia nicotianae (strain ATCC BAA-1114 / GMI1000) (Ralstonia solanacearum).